We begin with the raw amino-acid sequence, 259 residues long: Ribonuclease PH (259 aa).

Phosphate-binding positions include Arg-88 and 126 to 128 (GTR).

It belongs to the RNase PH family. Homohexameric ring arranged as a trimer of dimers.

The enzyme catalyses tRNA(n+1) + phosphate = tRNA(n) + a ribonucleoside 5'-diphosphate. Its function is as follows. Phosphorolytic 3'-5' exoribonuclease that plays an important role in tRNA 3'-end maturation. Removes nucleotide residues following the 3'-CCA terminus of tRNAs; can also add nucleotides to the ends of RNA molecules by using nucleoside diphosphates as substrates, but this may not be physiologically important. Probably plays a role in initiation of 16S rRNA degradation (leading to ribosome degradation) during starvation. The sequence is that of Ribonuclease PH from Mycobacterium avium (strain 104).